The primary structure comprises 297 residues: Haloalkane dehalogenase (297 aa).

The 102-residue stretch at Pro-47–Gly-148 folds into the AB hydrolase-1 domain. Catalysis depends on Asp-123, which acts as the Nucleophile. Asp-250 acts as the Proton donor in catalysis. Catalysis depends on His-279, which acts as the Proton acceptor.

The protein belongs to the haloalkane dehalogenase family. Type 1 subfamily. Monomer.

The catalysed reaction is 1-haloalkane + H2O = a halide anion + a primary alcohol + H(+). Functionally, catalyzes hydrolytic cleavage of carbon-halogen bonds in halogenated aliphatic compounds, leading to the formation of the corresponding primary alcohols, halide ions and protons. The polypeptide is Haloalkane dehalogenase (Mycobacterium marinum (strain ATCC BAA-535 / M)).